Here is a 258-residue protein sequence, read N- to C-terminus: Acetylglutamate kinase (258 aa).

Substrate contacts are provided by residues 44–45 (GG), R66, and N158. ATP-binding positions include 181-186 (DVSGIL) and 209-211 (IIT).

The protein belongs to the acetylglutamate kinase family. ArgB subfamily. As to quaternary structure, homodimer.

The protein resides in the cytoplasm. It carries out the reaction N-acetyl-L-glutamate + ATP = N-acetyl-L-glutamyl 5-phosphate + ADP. The protein operates within amino-acid biosynthesis; L-arginine biosynthesis; N(2)-acetyl-L-ornithine from L-glutamate: step 2/4. In terms of biological role, catalyzes the ATP-dependent phosphorylation of N-acetyl-L-glutamate. In Klebsiella pneumoniae subsp. pneumoniae (strain ATCC 700721 / MGH 78578), this protein is Acetylglutamate kinase.